The sequence spans 204 residues: Leucyl/phenylalanyl-tRNA--protein transferase (204 aa).

The protein belongs to the L/F-transferase family.

It is found in the cytoplasm. It carries out the reaction N-terminal L-lysyl-[protein] + L-leucyl-tRNA(Leu) = N-terminal L-leucyl-L-lysyl-[protein] + tRNA(Leu) + H(+). It catalyses the reaction N-terminal L-arginyl-[protein] + L-leucyl-tRNA(Leu) = N-terminal L-leucyl-L-arginyl-[protein] + tRNA(Leu) + H(+). The enzyme catalyses L-phenylalanyl-tRNA(Phe) + an N-terminal L-alpha-aminoacyl-[protein] = an N-terminal L-phenylalanyl-L-alpha-aminoacyl-[protein] + tRNA(Phe). Functions in the N-end rule pathway of protein degradation where it conjugates Leu, Phe and, less efficiently, Met from aminoacyl-tRNAs to the N-termini of proteins containing an N-terminal arginine or lysine. The polypeptide is Leucyl/phenylalanyl-tRNA--protein transferase (Brucella abortus (strain 2308)).